We begin with the raw amino-acid sequence, 101 residues long: Large ribosomal subunit protein uL24 (101 aa).

The protein belongs to the universal ribosomal protein uL24 family. Part of the 50S ribosomal subunit.

One of two assembly initiator proteins, it binds directly to the 5'-end of the 23S rRNA, where it nucleates assembly of the 50S subunit. Its function is as follows. One of the proteins that surrounds the polypeptide exit tunnel on the outside of the subunit. This Streptococcus agalactiae serotype III (strain NEM316) protein is Large ribosomal subunit protein uL24.